Reading from the N-terminus, the 389-residue chain is Chalcone synthase 1 (389 aa).

Cys164 is an active-site residue.

This sequence belongs to the thiolase-like superfamily. Chalcone/stilbene synthases family.

The enzyme catalyses (E)-4-coumaroyl-CoA + 3 malonyl-CoA + 3 H(+) = 2',4,4',6'-tetrahydroxychalcone + 3 CO2 + 4 CoA. It functions in the pathway secondary metabolite biosynthesis; flavonoid biosynthesis. Its function is as follows. The primary product of this enzyme is 4,2',4',6'-tetrahydroxychalcone (also termed naringenin-chalcone or chalcone) which can under specific conditions spontaneously isomerize into naringenin. In Solanum lycopersicum (Tomato), this protein is Chalcone synthase 1 (CHS1).